A 234-amino-acid chain; its full sequence is Sugar fermentation stimulation protein homolog (234 aa).

This sequence belongs to the SfsA family.

The sequence is that of Sugar fermentation stimulation protein homolog from Photobacterium profundum (strain SS9).